Reading from the N-terminus, the 304-residue chain is GTPase Era (304 aa).

The Era-type G domain occupies tyrosine 11 to glutamate 186. Residues glycine 19 to serine 26 are G1. Glycine 19–serine 26 provides a ligand contact to GTP. Positions glutamine 45–histidine 49 are G2. Residues aspartate 66–glycine 69 form a G3 region. Residues aspartate 66–leucine 70 and asparagine 128–aspartate 131 each bind GTP. The segment at asparagine 128–aspartate 131 is G4. A G5 region spans residues isoleucine 158 to alanine 160. Residues threonine 210–serine 287 enclose the KH type-2 domain.

The protein belongs to the TRAFAC class TrmE-Era-EngA-EngB-Septin-like GTPase superfamily. Era GTPase family. As to quaternary structure, monomer.

The protein localises to the cytoplasm. It localises to the cell inner membrane. Functionally, an essential GTPase that binds both GDP and GTP, with rapid nucleotide exchange. Plays a role in 16S rRNA processing and 30S ribosomal subunit biogenesis and possibly also in cell cycle regulation and energy metabolism. This Histophilus somni (strain 2336) (Haemophilus somnus) protein is GTPase Era.